Here is a 579-residue protein sequence, read N- to C-terminus: Potassium-transporting ATPase potassium-binding subunit (579 aa).

The next 10 membrane-spanning stretches (helical) occupy residues 2 to 22, 66 to 86, 135 to 155, 177 to 197, 262 to 282, 292 to 312, 391 to 411, 437 to 457, 490 to 510, and 546 to 566; these read MNLV…AIPL, SFSV…IHIF, GLTV…FALI, VLYI…SQGV, LSNL…CFTF, GIAI…IIGV, VFGG…LAVF, VLVC…ASIL, FAGF…SMLF, and FIGL…FPAL.

The protein belongs to the KdpA family. The system is composed of three essential subunits: KdpA, KdpB and KdpC.

It localises to the cell membrane. Part of the high-affinity ATP-driven potassium transport (or Kdp) system, which catalyzes the hydrolysis of ATP coupled with the electrogenic transport of potassium into the cytoplasm. This subunit binds the extracellular potassium ions and delivers the ions to the membrane domain of KdpB through an intramembrane tunnel. This Clostridium botulinum (strain Alaska E43 / Type E3) protein is Potassium-transporting ATPase potassium-binding subunit.